Here is a 767-residue protein sequence, read N- to C-terminus: MATYLEFIQQNEERDGVRFSWNVWPSSRLEATRMVVPLACLLTPLKERPDLPPVQYEPVLCSRPTCKAILNPLCQVDYRAKLWACNFCFQRNQFPPAYAGISEVNQPAELMPQFSTIEYMIQRGARSPLIFLYVVDTCLEEDDLQALKESLQMSLSLLPPDALVGLITFGRMVQVHELSCEGISKSYVFRGTKDLTAKQIQEMLGLTKSAMPVQQARPAQPQEQPFVSSRFLQPIHKIDMNLTDLLGELQRDPWPVTQGKRPLRSTGVALSIAVGLLEGTFPNTGARIMLFTGGPPTQGPGMVVGDELKTPIRSWHDIEKDNARFMKKATKHYEMLANRTATNGHCIDIYACALDQTGLLEMKCCPNLTGGHMVMGDSFNTSLFKQTFQRIFSKDFNGDFRMAFGATLDVKTSRELKIAGAIGPCVSLNVKGPCVSENELGVGGTSQWKICGLDPSSTLGIYFEVVNQHNAPVPQGGRGAIQFVTQYQHSSTQKRIRVTTIARNWADAQSQLRHIEAAFDQEAAAVLMARLGVFRAESEEGPDVLRWLDRQLIRLCQKFGQYNKEDPTSFRLSDSFSLYPQFMFHLRRSPFLQVFNNSPDESSYYRHHFARQDLTQSLIMIQPILYSYSFHGPPEPVLLDSSSILADRILLMDTFFQIVIYLGETIAQWRKAGYQDMPEYENFKHLLQAPLDDAQEILQARFPMPRYINTEHGGSQARFLLSKVNPSQTHNNLYAWGQETGAPILTDDVSLQVFMDHLKKLAVSSAS.

An N-acetylalanine modification is found at alanine 2. Zn(2+)-binding residues include cysteine 61, cysteine 66, cysteine 85, and cysteine 88. N6-acetyllysine is present on lysine 564. A Gelsolin-like repeat occupies 634-720 (PEPVLLDSSS…EHGGSQARFL (87 aa)).

It belongs to the SEC23/SEC24 family. SEC23 subfamily. COPII is composed of at least five proteins: the Sec23/24 complex, the Sec13/31 complex and Sar1. Interacts with SAR1A.

Its subcellular location is the cytoplasmic vesicle. It is found in the COPII-coated vesicle membrane. The protein localises to the endoplasmic reticulum membrane. It localises to the cytoplasm. The protein resides in the cytosol. In terms of biological role, component of the coat protein complex II (COPII) which promotes the formation of transport vesicles from the endoplasmic reticulum (ER). The coat has two main functions, the physical deformation of the endoplasmic reticulum membrane into vesicles and the selection of cargo molecules for their transport to the Golgi complex. The polypeptide is Protein transport protein Sec23B (Mus musculus (Mouse)).